A 205-amino-acid polypeptide reads, in one-letter code: CASP-like protein 0U1 (205 aa).

Over 1 to 38 (MDDAPGASDEAREPLLKRVGASVEGTSLMNHRLMKNPK) the chain is Cytoplasmic. The chain crosses the membrane as a helical span at residues 39-57 (FRALLVESLMALTTFSFMA). Residues 58–89 (KQTEGLAGPELSTLNDCGEAGCGFTKFYQFKG) lie on the Extracellular side of the membrane. The chain crosses the membrane as a helical span at residues 90–110 (VVGVYAGFWAYTVILIAMYVI). The Cytoplasmic segment spans residues 111-124 (RKAPPPGTEFASYA). The chain crosses the membrane as a helical span at residues 125-145 (LFTAAMATFVVMSITECASVV). Residues 146 to 159 (LSSDYYVCKNADYS) lie on the Extracellular side of the membrane. The chain crosses the membrane as a helical span at residues 160-180 (LVSLIFAAATIVLNCLTCAFA). At 181-205 (WRQWGELKFVGLPKTLSALTETYPG) the chain is on the cytoplasmic side.

Belongs to the Casparian strip membrane proteins (CASP) family. Homodimer and heterodimers.

The protein localises to the cell membrane. In Ostreococcus lucimarinus (strain CCE9901), this protein is CASP-like protein 0U1.